The sequence spans 260 residues: Indole-3-glycerol phosphate synthase (260 aa).

It belongs to the TrpC family.

The catalysed reaction is 1-(2-carboxyphenylamino)-1-deoxy-D-ribulose 5-phosphate + H(+) = (1S,2R)-1-C-(indol-3-yl)glycerol 3-phosphate + CO2 + H2O. It functions in the pathway amino-acid biosynthesis; L-tryptophan biosynthesis; L-tryptophan from chorismate: step 4/5. The sequence is that of Indole-3-glycerol phosphate synthase from Neisseria gonorrhoeae (strain ATCC 700825 / FA 1090).